Consider the following 512-residue polypeptide: Ribose import ATP-binding protein RbsA 1 (512 aa).

2 consecutive ABC transporter domains span residues 8–244 and 257–502; these read FRME…IGRE and PEEK…LNIG. 40–47 is an ATP binding site; that stretch reads GENGAGKS.

The protein belongs to the ABC transporter superfamily. Ribose importer (TC 3.A.1.2.1) family. The complex is composed of an ATP-binding protein (RbsA), two transmembrane proteins (RbsC) and a solute-binding protein (RbsB).

The protein localises to the cell inner membrane. The catalysed reaction is D-ribose(out) + ATP + H2O = D-ribose(in) + ADP + phosphate + H(+). Its function is as follows. Part of the ABC transporter complex RbsABC involved in ribose import. Responsible for energy coupling to the transport system. The chain is Ribose import ATP-binding protein RbsA 1 from Rhizobium etli (strain ATCC 51251 / DSM 11541 / JCM 21823 / NBRC 15573 / CFN 42).